The following is a 149-amino-acid chain: Antitoxin HigA1 (149 aa).

The region spanning 42–96 (LIALRKHCQLSQVEVAKRMGVRQPTVSGFEKEPSDPKLSTLQRYARALDARLRLV) is the HTH cro/C1-type domain. Positions 53 to 72 (QVEVAKRMGVRQPTVSGFEK) form a DNA-binding region, H-T-H motif.

In terms of assembly, interacts with SecB-like chaperone MT2006.

In terms of biological role, antitoxin component of an atypical, type II toxin-antitoxin chaperone (TAC) system. Probably neutralizes the toxic effects of cognate toxin HigB1, which also requires SecB-like chaperone MT2006 (AC Q7D7P7). Autorepresses its operon (higB1-higA1-MT2006). The sequence is that of Antitoxin HigA1 from Mycobacterium tuberculosis (strain CDC 1551 / Oshkosh).